The primary structure comprises 420 residues: MNNQSLSLIETLSRDAATAAQTLAVLDEQTKNTVLLDMAKSLRASTAEILAANQQDLTRAEEDNLGSAMLDRLLLTPERIEAMAQGIETIVSLPDPVGITRDLSERPNGIKIRKMRIPLGVVCMIYEARPNVTADAGALCFKSGNAVVLRGGKEALQSSLVIAKVLQAVLQQHKLPKALITVIPDPDRGLMMELMQQRAYIDVIIPRGGEGLINFVTDNSKIPVIQHFKGVCHLYVDKDADLDNAMALLLNGKTQRTGVCNALEGLIVHQDVAEAFLSKAAVELASHKVKINACSRAAKYFTGCTVLDDSEFGQEYLDLEIAIRIVDDFDHAIDHIRAFGSHHTEVISTKNDATAMRFQRTVDASVVMVNASSRFSDGGELGLGAEIGIATSKLHAYGPMGLESLTAEKYLVNGTGQVRS.

Belongs to the gamma-glutamyl phosphate reductase family.

It is found in the cytoplasm. The catalysed reaction is L-glutamate 5-semialdehyde + phosphate + NADP(+) = L-glutamyl 5-phosphate + NADPH + H(+). The protein operates within amino-acid biosynthesis; L-proline biosynthesis; L-glutamate 5-semialdehyde from L-glutamate: step 2/2. Its function is as follows. Catalyzes the NADPH-dependent reduction of L-glutamate 5-phosphate into L-glutamate 5-semialdehyde and phosphate. The product spontaneously undergoes cyclization to form 1-pyrroline-5-carboxylate. The chain is Gamma-glutamyl phosphate reductase from Shewanella denitrificans (strain OS217 / ATCC BAA-1090 / DSM 15013).